We begin with the raw amino-acid sequence, 209 residues long: Uracil phosphoribosyltransferase (209 aa).

5-phospho-alpha-D-ribose 1-diphosphate-binding positions include arginine 79, arginine 104, and 131 to 139 (DPMLATGGS). Residues isoleucine 194 and 199–201 (GDA) contribute to the uracil site. Aspartate 200 provides a ligand contact to 5-phospho-alpha-D-ribose 1-diphosphate.

This sequence belongs to the UPRTase family. It depends on Mg(2+) as a cofactor.

It carries out the reaction UMP + diphosphate = 5-phospho-alpha-D-ribose 1-diphosphate + uracil. It functions in the pathway pyrimidine metabolism; UMP biosynthesis via salvage pathway; UMP from uracil: step 1/1. With respect to regulation, allosterically activated by GTP. In terms of biological role, catalyzes the conversion of uracil and 5-phospho-alpha-D-ribose 1-diphosphate (PRPP) to UMP and diphosphate. This Anoxybacillus flavithermus (strain DSM 21510 / WK1) protein is Uracil phosphoribosyltransferase.